The chain runs to 99 residues: Acylphosphatase-1 (99 aa).

N-acetylalanine is present on Ala2. One can recognise an Acylphosphatase-like domain in the interval 9-99; it reads SVDYEIFGKV…LDYSDFQIVK (91 aa). Residues Arg24 and Asn42 contribute to the active site.

This sequence belongs to the acylphosphatase family. In terms of tissue distribution, organ-common type isozyme is found in many different tissues.

The enzyme catalyses an acyl phosphate + H2O = a carboxylate + phosphate + H(+). This is Acylphosphatase-1 (ACYP1) from Homo sapiens (Human).